The primary structure comprises 492 residues: SH2 domain-containing adapter protein E (492 aa).

Disordered stretches follow at residues 46 to 193, 214 to 236, 260 to 332, and 347 to 384; these read TASE…DKAK, KRTKGQRDAERVGENDGYMEPYD, LDGP…EQPW, and FEGSDRPPGREDAGRPHHWQKTLKPTLSDHGDGEKVDP. Ser-103 is subject to Phosphoserine. Over residues 149-158 the composition is skewed to basic and acidic residues; it reads IKVDTQEKNG. The span at 168-184 shows a compositional bias: low complexity; that stretch reads TSSSSSSSSSASSSPSS. Basic and acidic residues-rich tracts occupy residues 214–227, 268–285, 306–332, 349–361, and 373–383; these read KRTKGQRDAERVGE, ETVKVEATAKRRSSKDLL, AEVKTRPADSRLPEEDDRPAAEYEQPW, GSDRPPGREDAGR, and LSDHGDGEKVD. The SH2 domain maps to 393–488; sequence WYHGSISRAE…AEHMTLLHPV (96 aa).

In terms of tissue distribution, expressed in heart, brain, lung and skeletal muscle.

This is SH2 domain-containing adapter protein E (She) from Mus musculus (Mouse).